A 395-amino-acid chain; its full sequence is Guanine nucleotide-binding protein subunit beta-5b (395 aa).

WD repeat units follow at residues 103–142 (GHGNKVLCMDWCRDKRRIVSSSQDGKVIVWDAYTTNKEHA), 145–184 (MPCTWVMACAYAPSGCAVACGGLDNKCSVYPLSLDKNENL), 193–234 (MHTN…QSFH), 235–276 (GHSA…NVQS), 279–318 (THDSDINSVKYYPSGDAFASGSDDATCRLYDLRADREVAI), 320–362 (SKDS…RVAI), and 365–395 (GHENRVSTVRVSPDGTAFCSGSWDNTLRIWA).

The protein belongs to the WD repeat G protein beta family. As to quaternary structure, may interact with RGS9; this interaction stabilizes both proteins and increases RGS9 GTPase-activating protein (GAP) activity, hence accelerating the deactivation of D(2) dopamine receptor-mediated signaling.

It localises to the membrane. Functionally, enhances GTPase-activating protein (GAP) activity of regulator of G protein signaling (RGS) proteins, such as RGS7 and RGS9, hence involved in the termination of the signaling initiated by the G protein coupled receptors (GPCRs) by accelerating the GTP hydrolysis on the G-alpha subunits, thereby promoting their inactivation. Increases RGS7 GTPase-activating protein (GAP) activity, thereby regulating mood and cognition. Increases RGS9 GTPase-activating protein (GAP) activity, hence contributes to the deactivation of G protein signaling initiated by D(2) dopamine receptors. Along with gnb5a, plays an important role in neuronal signaling, including in the parasympathetic, but not sympathetic, control of heart rate. In Danio rerio (Zebrafish), this protein is Guanine nucleotide-binding protein subunit beta-5b.